Consider the following 566-residue polypeptide: 4-coumarate--CoA ligase-like 6 (566 aa).

Residues 1–21 (MAATHLHIPPNPKTQTSHQNP) form a disordered region. Ser-212, Ser-213, Gly-214, Thr-215, Thr-216, and Lys-220 together coordinate ATP. Residue Tyr-263 participates in (E)-4-coumaroyl-AMP binding. Arg-284 contributes to the CoA binding site. The SBD1 stretch occupies residues 286 to 356 (DASDVVNVIE…QTLPHVDLIQ (71 aa)). Positions 334, 356, 357, and 361 each coordinate (E)-4-coumaroyl-AMP. Residues Gln-356, Gly-357, Thr-361, Asp-442, and Arg-457 each coordinate ATP. Residues 357–421 (GYGMTESTAV…IQGPGVMKGY (65 aa)) are SBD2. Positions 459 and 463 each coordinate (E)-4-coumaroyl-AMP. Lys-465 and Gly-466 together coordinate CoA. Lys-548 contacts ATP. The Microbody targeting signal motif lies at 564–566 (SRL).

The protein belongs to the ATP-dependent AMP-binding enzyme family. Mg(2+) is required as a cofactor. As to expression, expressed at very low level in leaves.

Its subcellular location is the peroxisome. It carries out the reaction (E)-4-coumarate + ATP + CoA = (E)-4-coumaroyl-CoA + AMP + diphosphate. It catalyses the reaction (E)-4-coumarate + ATP + H(+) = (E)-4-coumaroyl-AMP + diphosphate. The catalysed reaction is (E)-4-coumaroyl-AMP + CoA = (E)-4-coumaroyl-CoA + AMP + H(+). The enzyme catalyses (E)-ferulate + ATP + CoA = (E)-feruloyl-CoA + AMP + diphosphate. It carries out the reaction (E)-ferulate + ATP + H(+) = (E)-feruloyl-AMP + diphosphate. It catalyses the reaction (E)-feruloyl-AMP + CoA = (E)-feruloyl-CoA + AMP + H(+). The catalysed reaction is (E)-caffeate + ATP + CoA = (E)-caffeoyl-CoA + AMP + diphosphate. The enzyme catalyses (E)-caffeate + ATP + H(+) = (E)-caffeoyl-AMP + diphosphate. It carries out the reaction (E)-caffeoyl-AMP + CoA = (E)-caffeoyl-CoA + AMP + H(+). It catalyses the reaction (E)-cinnamate + ATP + CoA = (E)-cinnamoyl-CoA + AMP + diphosphate. The catalysed reaction is 4-hydroxybenzoate + ATP + CoA = 4-hydroxybenzoyl-CoA + AMP + diphosphate. The enzyme catalyses tetradecanoate + ATP + CoA = tetradecanoyl-CoA + AMP + diphosphate. It carries out the reaction hexanoate + ATP + CoA = hexanoyl-CoA + AMP + diphosphate. It catalyses the reaction heptanoate + ATP + CoA = heptanoyl-CoA + AMP + diphosphate. Functionally, contributes to jasmonic acid biosynthesis by initiating the beta-oxidative chain shortening of its precursors. Acts as a carboxylate--CoA ligase that can use preferentially p-coumarate, ferulate and caffeate as substrates and, with a lower efficiency, (E)-cinnamate and 4-hydroxybenzoate as substrates. Involved in the biosynthesis of ubiquinone from phenylalanine by activating the propyl side chain of 4-coumarate, and possibly trans-cinnamate and 4-hydroxybenzoate, for subsequent beta-oxidative shortening and the formation of the benzenoid moiety of ubiquinone. Follows a two-step reaction mechanism, wherein the carboxylate substrate first undergoes adenylation by ATP, followed by a thioesterification in the presence of CoA to yield the final CoA thioester. The protein is 4-coumarate--CoA ligase-like 6 of Arabidopsis thaliana (Mouse-ear cress).